A 137-amino-acid polypeptide reads, in one-letter code: Large ribosomal subunit protein uL16 (137 aa).

The protein belongs to the universal ribosomal protein uL16 family. As to quaternary structure, part of the 50S ribosomal subunit.

Its function is as follows. Binds 23S rRNA and is also seen to make contacts with the A and possibly P site tRNAs. This Anaplasma phagocytophilum (strain HZ) protein is Large ribosomal subunit protein uL16.